A 217-amino-acid polypeptide reads, in one-letter code: Meiotic expression up-regulated protein 29 (217 aa).

The N-terminal stretch at 1–21 is a signal peptide; sequence MFVVKTAVLLFFALFIGNTYA. Topologically, residues 22–133 are extracellular; that stretch reads YTYSLDRIQA…SGVLLHRPWK (112 aa). Residue Asn84 is glycosylated (N-linked (GlcNAc...) asparagine). Residues 134–154 traverse the membrane as a helical segment; the sequence is LFSLKPFTAAFVLLLAASYLA. Residues 155-217 are Cytoplasmic-facing; it reads TACFRMLGYL…VPVPVLDESV (63 aa).

The protein resides in the membrane. This chain is Meiotic expression up-regulated protein 29 (meu29), found in Schizosaccharomyces pombe (strain 972 / ATCC 24843) (Fission yeast).